Reading from the N-terminus, the 205-residue chain is HTH-type transcriptional repressor KstR2 (205 aa).

In terms of domain architecture, HTH tetR-type spans 10–70; that stretch reads ASRRDELLQL…EVLRDFLDWL (61 aa). Residues 33-52 constitute a DNA-binding region (H-T-H motif); sequence TVRDIADSAGILSGSLYHHF.

In terms of assembly, homodimer.

Its function is as follows. Controls the expression of a small regulon that may play a role in the utilization of cholesterol. This is HTH-type transcriptional repressor KstR2 (kstR2) from Mycolicibacterium smegmatis (strain ATCC 700084 / mc(2)155) (Mycobacterium smegmatis).